Here is a 330-residue protein sequence, read N- to C-terminus: Uroporphyrinogen decarboxylase (330 aa).

Substrate is bound by residues 10–14, Phe29, Ser59, Asp60, Tyr137, Ser192, and His307; that span reads RQAGR.

The protein belongs to the uroporphyrinogen decarboxylase family. As to quaternary structure, homodimer.

Its subcellular location is the plastid. The protein resides in the chloroplast. The catalysed reaction is uroporphyrinogen III + 4 H(+) = coproporphyrinogen III + 4 CO2. It participates in porphyrin-containing compound metabolism; protoporphyrin-IX biosynthesis; coproporphyrinogen-III from 5-aminolevulinate: step 4/4. Catalyzes the decarboxylation of four acetate groups of uroporphyrinogen-III to yield coproporphyrinogen-III. The sequence is that of Uroporphyrinogen decarboxylase (DCUP) from Hordeum vulgare (Barley).